A 364-amino-acid chain; its full sequence is Anthranilate phosphoribosyltransferase (364 aa).

Positions 1–10 are enriched in polar residues; it reads MTSGPSQPFP. Positions 1 to 22 are disordered; the sequence is MTSGPSQPFPSASGPDDGPSWP. Residues G101, 104 to 105, T109, 111 to 114, 129 to 137, and G141 each bind 5-phospho-alpha-D-ribose 1-diphosphate; these read GD, NLST, and KHGNRAASS. Position 101 (G101) interacts with anthranilate. S113 contacts Mg(2+). Position 132 (N132) interacts with anthranilate. R187 contributes to the anthranilate binding site. Mg(2+) contacts are provided by D245 and E246.

The protein belongs to the anthranilate phosphoribosyltransferase family. Homodimer. It depends on Mg(2+) as a cofactor.

The enzyme catalyses N-(5-phospho-beta-D-ribosyl)anthranilate + diphosphate = 5-phospho-alpha-D-ribose 1-diphosphate + anthranilate. The protein operates within amino-acid biosynthesis; L-tryptophan biosynthesis; L-tryptophan from chorismate: step 2/5. In terms of biological role, catalyzes the transfer of the phosphoribosyl group of 5-phosphorylribose-1-pyrophosphate (PRPP) to anthranilate to yield N-(5'-phosphoribosyl)-anthranilate (PRA). In Mycolicibacterium smegmatis (strain ATCC 700084 / mc(2)155) (Mycobacterium smegmatis), this protein is Anthranilate phosphoribosyltransferase.